A 1211-amino-acid polypeptide reads, in one-letter code: Sterol 3-beta-glucosyltransferase (1211 aa).

The span at Met-1–Ser-10 shows a compositional bias: basic and acidic residues. Residues Met-1–Asp-61 are disordered. Residues Glu-196–Leu-235 form the GRAM 1 domain. Positions Val-248 to Phe-347 constitute a PH domain. Disordered regions lie at residues Leu-422–Arg-452 and Val-500–Trp-531. The span at Thr-423–Ser-432 shows a compositional bias: acidic residues. The span at Ser-507 to Ser-525 shows a compositional bias: basic and acidic residues. Residues Ser-586–Lys-652 form the GRAM 2 domain. UDP-alpha-D-glucose contacts are provided by Ser-770, Arg-771, Asp-773, Asn-1046, Asn-1072, Val-1073, His-1075, His-1088, Ser-1091, Gly-1092, Thr-1093, Asp-1112, and Gln-1113.

It belongs to the glycosyltransferase 28 family.

It localises to the cytoplasm. Its subcellular location is the preautophagosomal structure membrane. The catalysed reaction is a sterol + UDP-alpha-D-glucose = a sterol 3-beta-D-glucoside + UDP + H(+). It catalyses the reaction ergosterol + UDP-alpha-D-glucose = ergosteryl 3-beta-D-glucoside + UDP + H(+). In terms of biological role, sterol glycosyltransferase responsible for the glycosylation of ergosterol to form ergosterol-glucoside. Shows also activity in vitro on other sterols such as cholesterol, beta-sitosterol, stigmasterol and tomatidine. Probable sterol 3-beta-glucosyltransferase that mediates autophagic degradation of peroxisomes (pexophagy). This chain is Sterol 3-beta-glucosyltransferase, found in Komagataella phaffii (strain GS115 / ATCC 20864) (Yeast).